The primary structure comprises 124 residues: Ragulator complex protein LAMTOR2 homolog (124 aa).

It belongs to the GAMAD family. Part of the Ragulator complex.

Functionally, regulator of the TOR pathway, a signaling cascade that promotes cell growth in response to growth factors, energy levels, and amino acids. May activate the TOR signaling cascade in response to amino acids. In Caenorhabditis elegans, this protein is Ragulator complex protein LAMTOR2 homolog.